We begin with the raw amino-acid sequence, 384 residues long: Gastrin-releasing peptide receptor (384 aa).

Topologically, residues 1 to 39 (MDPNNCSHLNLEVDPFLSCNNTFNQTLNPPKMDNWFHPG) are extracellular. Asparagine 5, asparagine 20, and asparagine 24 each carry an N-linked (GlcNAc...) asparagine glycan. Residues 40 to 63 (IIYVIPAVYGLIIVIGLIGNITLI) traverse the membrane as a helical segment. Topologically, residues 64–77 (KIFCTVKSMRNVPN) are cytoplasmic. The chain crosses the membrane as a helical span at residues 78 to 97 (LFISSLALGDLLLLVTCAPV). The Extracellular portion of the chain corresponds to 98 to 115 (DASKYLADRWLFGRIGCK). An intrachain disulfide couples cysteine 114 to cysteine 197. A helical membrane pass occupies residues 116–137 (LIPFIQLTSVGVSVFTLTALSA). Residues 138–153 (DRYKAIVRPMDIQASH) are Cytoplasmic-facing. A helical membrane pass occupies residues 154–175 (ALMKICLKAALIWIVSMLLAIP). The Extracellular portion of the chain corresponds to 176-209 (EAVFSDLHPFHVKDTNQTFISCAPYPHSNELHPK). A helical membrane pass occupies residues 210 to 235 (IHSMASFLVFYIIPLSIISVYYYFIA). Residues 236–265 (RNLIQSAYNLPVEGNIHVKKQIESRKRLAK) lie on the Cytoplasmic side of the membrane. A helical transmembrane segment spans residues 266-286 (TVLVFVGLFAFCWLPNHVIYL). At 287-299 (YRSYHYSEVDTSM) the chain is on the extracellular side. The helical transmembrane segment at 300 to 326 (LHFITSICARLLAFTNSCVNPFALYLL) threads the bilayer. Residues 327-384 (SKSFRKQFNTQLLCCQPSLLNRSHSTGRSTTCMTSFKSTNPSATFSLINGNICHEGYV) are Cytoplasmic-facing. Cysteine 340 is lipidated: S-palmitoyl cysteine. Serine 351 carries the post-translational modification Phosphoserine.

Belongs to the G-protein coupled receptor 1 family. In terms of tissue distribution, expressed in the hippocampal CA1 region (at protein level).

It is found in the cell membrane. Functionally, receptor for gastrin-releasing peptide (GRP). Signals via association with G proteins that activate a phosphatidylinositol-calcium second messenger system, resulting in Akt phosphorylation. Contributes to the regulation of food intake. Contributes to the perception of prurient stimuli and transmission of itch signals in the spinal cord that promote scratching behavior, but does not play a role in the perception of pain. Contributes primarily to nonhistaminergic itch sensation. In one study, shown to act in the amygdala as part of an inhibitory network which inhibits memory specifically related to learned fear. In another study, shown to contribute to disinhibition of glutamatergic cells in the auditory cortex via signaling on vasoactive intestinal peptide-expressing cells which leads to enhanced auditory fear memories. Contributes to the induction of sighing through signaling in the pre-Botzinger complex, a cluster of several thousand neurons in the ventrolateral medulla responsible for inspiration during respiratory activity. This chain is Gastrin-releasing peptide receptor (Grpr), found in Rattus norvegicus (Rat).